A 242-amino-acid polypeptide reads, in one-letter code: Ubiquitin-conjugating enzyme E2 6 (242 aa).

Residues 1 to 220 (MASRQSQKRL…HSTPSFGVQR (220 aa)) are Cytoplasmic-facing. A UBC core domain is found at 5–156 (QSQKRLTKEY…NQRFTKQFPD (152 aa)). The active-site Glycyl thioester intermediate is the Cys87. The tract at residues 170-190 (AREQAAATTDSTDPEKPFDVR) is disordered. The helical transmembrane segment at 221-240 (FTLVGVVVAAFIAAYFNFFS) threads the bilayer.

Belongs to the ubiquitin-conjugating enzyme family.

The protein localises to the endoplasmic reticulum membrane. The catalysed reaction is S-ubiquitinyl-[E1 ubiquitin-activating enzyme]-L-cysteine + [E2 ubiquitin-conjugating enzyme]-L-cysteine = [E1 ubiquitin-activating enzyme]-L-cysteine + S-ubiquitinyl-[E2 ubiquitin-conjugating enzyme]-L-cysteine.. The protein operates within protein modification; protein ubiquitination. Functionally, catalyzes the covalent attachment of ubiquitin to other proteins. Functions in degradation of misfolded or regulated proteins localized in the endoplasmic reticulum (ER) lumen or membrane via the ubiquitin-proteasome system. Cognate E2 conjugating enzyme for the DOA10 ubiquitin ligase complex, which is part of the ERAD-C pathway responsible for the rapid degradation of membrane proteins with misfolded cytoplasmic domains. The polypeptide is Ubiquitin-conjugating enzyme E2 6 (UBC6) (Debaryomyces hansenii (strain ATCC 36239 / CBS 767 / BCRC 21394 / JCM 1990 / NBRC 0083 / IGC 2968) (Yeast)).